Here is a 201-residue protein sequence, read N- to C-terminus: UPF0301 protein CE2927 (201 aa).

This sequence belongs to the UPF0301 (AlgH) family.

This chain is UPF0301 protein CE2927, found in Corynebacterium efficiens (strain DSM 44549 / YS-314 / AJ 12310 / JCM 11189 / NBRC 100395).